Here is a 67-residue protein sequence, read N- to C-terminus: Large ribosomal subunit protein uL29 (67 aa).

Belongs to the universal ribosomal protein uL29 family.

The sequence is that of Large ribosomal subunit protein uL29 from Magnetococcus marinus (strain ATCC BAA-1437 / JCM 17883 / MC-1).